The primary structure comprises 181 residues: Large ribosomal subunit protein uL5 (181 aa).

The protein belongs to the universal ribosomal protein uL5 family. In terms of assembly, part of the 50S ribosomal subunit; part of the 5S rRNA/L5/L18/L25 subcomplex. Contacts the 5S rRNA and the P site tRNA. Forms a bridge to the 30S subunit in the 70S ribosome.

Its function is as follows. This is one of the proteins that bind and probably mediate the attachment of the 5S RNA into the large ribosomal subunit, where it forms part of the central protuberance. In the 70S ribosome it contacts protein S13 of the 30S subunit (bridge B1b), connecting the 2 subunits; this bridge is implicated in subunit movement. Contacts the P site tRNA; the 5S rRNA and some of its associated proteins might help stabilize positioning of ribosome-bound tRNAs. The sequence is that of Large ribosomal subunit protein uL5 from Helicobacter pylori (strain P12).